Here is a 616-residue protein sequence, read N- to C-terminus: Protein NRT1/ PTR FAMILY 2.11 (616 aa).

The tract at residues 1–22 is disordered; the sequence is MERKPLELESTDNHQNPSSAVY. Transmembrane regions (helical) follow at residues 59–79, 87–107, 118–138, 159–179, 205–225, 233–253, 349–369, 392–412, 435–455, 483–503, 519–539, and 566–586; these read FEKL…TAVF, ATII…AAFL, LSVA…TAAV, GGQI…AGGI, FFNW…TLVV, WTIG…IFFA, VKCI…YLTI, FVIP…VFIV, LQRI…AGFV, AMWL…AAIG, FAGS…SFLI, and LFYF…LVMS.

This sequence belongs to the major facilitator superfamily. Proton-dependent oligopeptide transporter (POT/PTR) (TC 2.A.17) family. As to expression, expressed in roots. Detected in shoots, stems and flowers. Expressed in veins and in the root vasculature with highest expression in lateral branching points.

The protein localises to the cell membrane. In terms of biological role, high-affinity, proton-dependent glucosinolate-specific transporter. Involved in apoplasmic phloem-loading of glucosinolates and in bidirectional long-distance transport of aliphatic but not indole glucosinolates. May be involved in removal of glucosinolates from the xylem in roots. In Arabidopsis thaliana (Mouse-ear cress), this protein is Protein NRT1/ PTR FAMILY 2.11 (NPF2.11).